A 354-amino-acid polypeptide reads, in one-letter code: Protein-glutamate methylesterase/protein-glutamine glutaminase 2 (354 aa).

The region spanning 3–120 (RVVVVDDSMS…PADLADYARD (118 aa)) is the Response regulatory domain. Asp-54 is subject to 4-aspartylphosphate. In terms of domain architecture, CheB-type methylesterase spans 164–354 (ATRLSRVIAI…MGARLSEALQ (191 aa)). Catalysis depends on residues Ser-176, His-202, and Asp-298.

Belongs to the CheB family. In terms of processing, phosphorylated by CheA. Phosphorylation of the N-terminal regulatory domain activates the methylesterase activity.

The protein localises to the cytoplasm. The enzyme catalyses [protein]-L-glutamate 5-O-methyl ester + H2O = L-glutamyl-[protein] + methanol + H(+). It carries out the reaction L-glutaminyl-[protein] + H2O = L-glutamyl-[protein] + NH4(+). Involved in chemotaxis. Part of a chemotaxis signal transduction system that modulates chemotaxis in response to various stimuli. Catalyzes the demethylation of specific methylglutamate residues introduced into the chemoreceptors (methyl-accepting chemotaxis proteins or MCP) by CheR. Also mediates the irreversible deamidation of specific glutamine residues to glutamic acid. The polypeptide is Protein-glutamate methylesterase/protein-glutamine glutaminase 2 (Burkholderia thailandensis (strain ATCC 700388 / DSM 13276 / CCUG 48851 / CIP 106301 / E264)).